The sequence spans 190 residues: CASP-like protein 2U1 (190 aa).

The Cytoplasmic portion of the chain corresponds to 1 to 16; it reads MAFTSLLGSDAERKVA. The helical transmembrane segment at 17 to 37 threads the bilayer; the sequence is VAEVALRAVLCGLGALAAALV. At 38-59 the chain is on the extracellular side; sequence ATDTQTRTFFSLQKKATYTDMK. The helical transmembrane segment at 60–80 threads the bilayer; the sequence is AMVLLVAAAAAAAGYSLLQAA. The Cytoplasmic portion of the chain corresponds to 81-100; it reads RCCCCVALLRTSIRPRARLL. The helical transmembrane segment at 101-121 threads the bilayer; that stretch reads LAWCVFACDQALAYALLAAVV. At 122 to 152 the chain is on the extracellular side; it reads AALQASVVAKQGLPQLQWMAICALYGAFCRQ. A helical transmembrane segment spans residues 153 to 173; that stretch reads AGAGVACAVAAAVDAALLAFL. Residues 174–190 lie on the Cytoplasmic side of the membrane; sequence SAFNLFRLYGAKATTTT.

The protein belongs to the Casparian strip membrane proteins (CASP) family. As to quaternary structure, homodimer and heterodimers.

It is found in the cell membrane. This Zea mays (Maize) protein is CASP-like protein 2U1.